The primary structure comprises 56 residues: Mitoregulin (56 aa).

Topologically, residues 2 to 9 are mitochondrial matrix; the sequence is ADVSERTL. The chain crosses the membrane as a helical span at residues 10–27; sequence QLSVLVAFASGVLLGWQA. Residues 28–56 are Mitochondrial intermembrane-facing; that stretch reads NRLRRRYLDWRKRRLQDKLAATQKKLDLA.

In terms of assembly, interacts with mitochondrial trifunctional enzyme, a heterotetrameric complex composed of 2 HADHA subunits and 2 HADHB subunits. Interacts with cytochrome b5 reductase CYB5R3; the interaction is required to maintain cellular lipid composition and leads to stimulation of mitochondrial respiratory complex I activity. Interacts with ATP synthase subunit ATP5F1B/ATP5B.

It localises to the mitochondrion inner membrane. Positively regulates mitochondrial complex assembly and/or stability. Increases mitochondrial membrane potential while decreasing mitochondrial reactive oxygen species. Increases mitochondrial respiration rate. Increased mitochondrial respiratory activity promotes myogenic differentiation which facilitates muscle growth and regeneration. Increases mitochondrial calcium retention capacity. Plays a role in maintenance of cellular lipid composition through its interaction with cytochrome b5 reductase CYB5R3 which is required for mitochondrial respiratory complex I activity. Interacts with the mitochondrial trifunctional enzyme complex (MTE) and enhances fatty acid beta-oxidation. Not required for MTE formation or stability. Modulates triglyceride clearance in adipocytes through its role in regulating fatty acid beta-oxidation and lipolysis. The polypeptide is Mitoregulin (Homo sapiens (Human)).